The primary structure comprises 1154 residues: PAN2-PAN3 deadenylation complex catalytic subunit pan2 (1154 aa).

WD repeat units follow at residues 20–59 (GLPTVATTIAFDDVSELLWAGNEYGRITSFYGPELQRYTS), 102–145 (THDE…DKLR), and 276–315 (ATVSFMLGIEISPSGEALAINDAECFIQLWGSPAKIHFNE). A linker region spans residues 316-451 (MSKEVEFADV…GARISGESED (136 aa)). The USP domain occupies 452–821 (DPLLKYSNVE…SPCVLAFQVR (370 aa)). Positions 870–1048 (VALDTEFVDL…IEDARMALRL (179 aa)) constitute an Exonuclease domain. Asp-873, Glu-875, Asp-982, and Asp-1041 together coordinate a divalent metal cation. Residues 1092–1154 (PGTAVTMQNN…GEFFTGSPLK (63 aa)) are disordered. Composition is skewed to polar residues over residues 1096–1109 (VTMQNNSGRNTPST) and 1132–1141 (LTPSNGTFSG).

Belongs to the peptidase C19 family. PAN2 subfamily. Forms a heterotrimer with an asymmetric homodimer of the regulatory subunit pan3 to form the poly(A)-nuclease (PAN) deadenylation complex. A divalent metal cation is required as a cofactor.

It is found in the cytoplasm. The enzyme catalyses Exonucleolytic cleavage of poly(A) to 5'-AMP.. Its activity is regulated as follows. Positively regulated by the regulatory subunit pan3. Catalytic subunit of the poly(A)-nuclease (PAN) deadenylation complex, one of two cytoplasmic mRNA deadenylases involved in mRNA turnover. PAN specifically shortens poly(A) tails of RNA and the activity is stimulated by poly(A)-binding protein pab1. PAN deadenylation is followed by rapid degradation of the shortened mRNA tails by the CCR4-NOT complex. Deadenylated mRNAs are then degraded by two alternative mechanisms, namely exosome-mediated 3'-5' exonucleolytic degradation, or deadenylation-dependent mRNA decaping and subsequent 5'-3' exonucleolytic degradation by xrn1. May also be involved in post-transcriptional maturation of mRNA poly(A) tails. This Emericella nidulans (strain FGSC A4 / ATCC 38163 / CBS 112.46 / NRRL 194 / M139) (Aspergillus nidulans) protein is PAN2-PAN3 deadenylation complex catalytic subunit pan2.